Reading from the N-terminus, the 1169-residue chain is RecBCD enzyme subunit RecB (1169 aa).

In terms of domain architecture, UvrD-like helicase ATP-binding spans 1–436; that stretch reads MNKILEKIQN…IVLKINHRSS (436 aa). A DNA-binding and helicase activity, interacts with RecC region spans residues 1–839; it reads MNKILEKIQN…LLEIAKIFTI (839 aa). 18 to 25 serves as a coordination point for ATP; the sequence is ASAGTGKT. One can recognise a UvrD-like helicase C-terminal domain in the interval 459 to 746; the sequence is IEKIDFTNSL…ELMTIHKSKG (288 aa). The interval 883-1169 is nuclease activity, interacts with RecD and RecA; it reads KEYTSSFSSL…ILELGIKRHL (287 aa). Residues His-939, Asp-1052, and Asp-1065 each coordinate Mg(2+). Catalysis depends on Asp-1065, which acts as the For nuclease activity.

It belongs to the helicase family. UvrD subfamily. As to quaternary structure, heterotrimer of RecB, RecC and RecD. All subunits contribute to DNA-binding. Interacts with RecA. The cofactor is Mg(2+).

It carries out the reaction Exonucleolytic cleavage (in the presence of ATP) in either 5'- to 3'- or 3'- to 5'-direction to yield 5'-phosphooligonucleotides.. It catalyses the reaction Couples ATP hydrolysis with the unwinding of duplex DNA by translocating in the 3'-5' direction.. The enzyme catalyses ATP + H2O = ADP + phosphate + H(+). In terms of biological role, a helicase/nuclease that prepares dsDNA breaks (DSB) for recombinational DNA repair. Binds to DSBs and unwinds DNA via a highly rapid and processive ATP-dependent bidirectional helicase activity. Unwinds dsDNA until it encounters a Chi (crossover hotspot instigator) sequence from the 3' direction. Cuts ssDNA a few nucleotides 3' to the Chi site. The properties and activities of the enzyme are changed at Chi. The Chi-altered holoenzyme produces a long 3'-ssDNA overhang and facilitates RecA-binding to the ssDNA for homologous DNA recombination and repair. Holoenzyme degrades any linearized DNA that is unable to undergo homologous recombination. In the holoenzyme this subunit contributes ATPase, 3'-5' helicase, exonuclease activity and loads RecA onto ssDNA. The chain is RecBCD enzyme subunit RecB from Borreliella burgdorferi (strain ATCC 35210 / DSM 4680 / CIP 102532 / B31) (Borrelia burgdorferi).